The chain runs to 141 residues: Nucleoside triphosphatase NudI (141 aa).

The Nudix hydrolase domain occupies 1 to 141 (MRQRTIVCPL…RKTLRLKGLL (141 aa)). Positions 38–59 (GGVEPGERIEEALRREIREELG) match the Nudix box motif.

This sequence belongs to the Nudix hydrolase family. NudI subfamily. Monomer. The cofactor is Mg(2+).

The catalysed reaction is a ribonucleoside 5'-triphosphate + H2O = a ribonucleoside 5'-phosphate + diphosphate + H(+). It catalyses the reaction a 2'-deoxyribonucleoside 5'-triphosphate + H2O = a 2'-deoxyribonucleoside 5'-phosphate + diphosphate + H(+). The enzyme catalyses dUTP + H2O = dUMP + diphosphate + H(+). It carries out the reaction dTTP + H2O = dTMP + diphosphate + H(+). The catalysed reaction is dCTP + H2O = dCMP + diphosphate + H(+). Its function is as follows. Catalyzes the hydrolysis of nucleoside triphosphates, with a preference for pyrimidine deoxynucleoside triphosphates (dUTP, dTTP and dCTP). In Escherichia coli (strain ATCC 8739 / DSM 1576 / NBRC 3972 / NCIMB 8545 / WDCM 00012 / Crooks), this protein is Nucleoside triphosphatase NudI.